A 158-amino-acid chain; its full sequence is Cyclic pyranopterin monophosphate synthase (158 aa).

Residues leucine 75 to histidine 77 and methionine 113 to glutamate 114 contribute to the substrate site. Aspartate 128 is an active-site residue.

It belongs to the MoaC family. As to quaternary structure, homohexamer; trimer of dimers.

The catalysed reaction is (8S)-3',8-cyclo-7,8-dihydroguanosine 5'-triphosphate = cyclic pyranopterin phosphate + diphosphate. It functions in the pathway cofactor biosynthesis; molybdopterin biosynthesis. In terms of biological role, catalyzes the conversion of (8S)-3',8-cyclo-7,8-dihydroguanosine 5'-triphosphate to cyclic pyranopterin monophosphate (cPMP). This chain is Cyclic pyranopterin monophosphate synthase, found in Mannheimia succiniciproducens (strain KCTC 0769BP / MBEL55E).